The primary structure comprises 412 residues: Short-chain specific acyl-CoA dehydrogenase, mitochondrial (412 aa).

The N-terminal 24 residues, 1–24 (MAAALLARARGPLRRALGVRDWRR), are a transit peptide targeting the mitochondrion. Residue T27 is modified to Phosphothreonine. At K51 the chain carries N6-acetyllysine; alternate. The residue at position 51 (K51) is an N6-succinyllysine; alternate. N6-acetyllysine is present on K72. Position 129 is an N6-acetyllysine; alternate (K129). Residue K129 is modified to N6-succinyllysine; alternate. FAD is bound by residues 152 to 161 (FALSEPGNGS) and 185 to 187 (WIT). S161 contacts substrate. An N6-acetyllysine modification is found at K208. K262 bears the N6-acetyllysine; alternate mark. An N6-succinyllysine; alternate modification is found at K262. 269–272 (DMGR) lines the substrate pocket. K292 is modified (N6-acetyllysine). R297 contacts FAD. An N6-acetyllysine; alternate modification is found at K306. The residue at position 306 (K306) is an N6-succinyllysine; alternate. Residues Q308 and 365 to 369 (QILGG) contribute to the FAD site. Catalysis depends on E392, which acts as the Proton acceptor. Substrate is bound at residue G393. An FAD-binding site is contributed by 394–396 (TSE).

The protein belongs to the acyl-CoA dehydrogenase family. In terms of assembly, homotetramer. The cofactor is FAD.

The protein resides in the mitochondrion matrix. It catalyses the reaction a short-chain 2,3-saturated fatty acyl-CoA + oxidized [electron-transfer flavoprotein] + H(+) = a short-chain (2E)-enoyl-CoA + reduced [electron-transfer flavoprotein]. The enzyme catalyses butanoyl-CoA + oxidized [electron-transfer flavoprotein] + H(+) = (2E)-butenoyl-CoA + reduced [electron-transfer flavoprotein]. The catalysed reaction is pentanoyl-CoA + oxidized [electron-transfer flavoprotein] + H(+) = (2E)-pentenoyl-CoA + reduced [electron-transfer flavoprotein]. It carries out the reaction hexanoyl-CoA + oxidized [electron-transfer flavoprotein] + H(+) = (2E)-hexenoyl-CoA + reduced [electron-transfer flavoprotein]. Its pathway is lipid metabolism; mitochondrial fatty acid beta-oxidation. Functionally, short-chain specific acyl-CoA dehydrogenase is one of the acyl-CoA dehydrogenases that catalyze the first step of mitochondrial fatty acid beta-oxidation, an aerobic process breaking down fatty acids into acetyl-CoA and allowing the production of energy from fats. The first step of fatty acid beta-oxidation consists in the removal of one hydrogen from C-2 and C-3 of the straight-chain fatty acyl-CoA thioester, resulting in the formation of trans-2-enoyl-CoA. Among the different mitochondrial acyl-CoA dehydrogenases, short-chain specific acyl-CoA dehydrogenase acts specifically on acyl-CoAs with saturated 4 to 6 carbons long primary chains. In Mus musculus (Mouse), this protein is Short-chain specific acyl-CoA dehydrogenase, mitochondrial (Acads).